An 85-amino-acid polypeptide reads, in one-letter code: Large ribosomal subunit protein bL27 (85 aa).

This sequence belongs to the bacterial ribosomal protein bL27 family.

This chain is Large ribosomal subunit protein bL27, found in Stutzerimonas stutzeri (strain A1501) (Pseudomonas stutzeri).